Reading from the N-terminus, the 421-residue chain is Adenosylhomocysteinase (421 aa).

2 residues coordinate substrate: aspartate 128 and glutamate 153. 154–156 (TTT) contacts NAD(+). 2 residues coordinate substrate: lysine 183 and aspartate 187. NAD(+) contacts are provided by residues asparagine 188, 217–222 (GYGWCG), glutamate 240, 296–298 (AGH), and asparagine 343.

It belongs to the adenosylhomocysteinase family. Requires NAD(+) as cofactor.

The protein localises to the cytoplasm. It carries out the reaction S-adenosyl-L-homocysteine + H2O = L-homocysteine + adenosine. It functions in the pathway amino-acid biosynthesis; L-homocysteine biosynthesis; L-homocysteine from S-adenosyl-L-homocysteine: step 1/1. In terms of biological role, may play a key role in the regulation of the intracellular concentration of adenosylhomocysteine. The protein is Adenosylhomocysteinase of Thermococcus kodakarensis (strain ATCC BAA-918 / JCM 12380 / KOD1) (Pyrococcus kodakaraensis (strain KOD1)).